An 88-amino-acid chain; its full sequence is Small ribosomal subunit protein uS17 (88 aa).

The protein belongs to the universal ribosomal protein uS17 family. As to quaternary structure, part of the 30S ribosomal subunit.

Its function is as follows. One of the primary rRNA binding proteins, it binds specifically to the 5'-end of 16S ribosomal RNA. This is Small ribosomal subunit protein uS17 from Pseudomonas fluorescens (strain SBW25).